A 36-amino-acid polypeptide reads, in one-letter code: Photosystem I reaction center subunit VIII (36 aa).

The chain crosses the membrane as a helical span at residues 10-30 (FVPLVGLVFSAIIMVLSFLYI).

It belongs to the PsaI family.

It localises to the plastid. The protein resides in the chloroplast thylakoid membrane. Functionally, may help in the organization of the PsaL subunit. This Welwitschia mirabilis (Tree tumbo) protein is Photosystem I reaction center subunit VIII.